Consider the following 372-residue polypeptide: Oxidoreductase ptaL (372 aa).

Residues methionine 1–threonine 16 form the signal peptide. 6-hydroxy-FAD contacts are provided by residues glycine 8–alanine 12 and arginine 51. N-linked (GlcNAc...) asparagine glycosylation is present at asparagine 251. Residue aspartate 285 participates in 6-hydroxy-FAD binding.

It belongs to the FAD-dependent oxidoreductase family. It depends on 6-hydroxy-FAD as a cofactor.

It functions in the pathway secondary metabolite biosynthesis. Its function is as follows. Oxidoreductase; part of the gene cluster that mediates the biosynthesis of pestheic acid, a diphenyl ether which is a biosynthetic precursor of the unique chloropupukeananes. The biosynthesis initiates from condensation of acetate and malonate units catalyzed by the non-reducing PKS ptaA. As the ptaA protein is TE/CLC domain-deficient, hydrolysis and Claisen cyclization of the polyketide could be catalyzed by ptaB containing a beta-lactamase domain. The ptaB protein might hydrolyze the thioester bond between the ACP of ptaA and the intermediate to release atrochrysone carboxylic acid, which is spontaneously dehydrated to form endocrocin anthrone. Endocrocin anthrone is then converted to endocrocin, catalyzed by the anthrone oxygenase ptaC. Spontaneous decarboxylation of endocrocin occurs to generate emodin. An O-methyltransferase (ptaH or ptaI) could methylate emodin to form physcion. PtaJ could then catalyze the oxidative cleavage of physcion, and rotation of the intermediate could then afford desmethylisosulochrin. PtaF, a putative NADH-dependent oxidoreductase, might also participate in the oxidative cleavage step. Desmethylisosulochrin is then transformed by another O-methyltransferase (ptaH or ptaI) to form isosulochrin. Chlorination of isosulochrin by ptaM in the cyclohexadienone B ring then produces chloroisosulochrin. PtaE is responsible for the oxidative coupling reactions of both benzophenones isosulochrin and chloroisosulochrin to RES-1214-1 and pestheic acid respectively, regardless of chlorination. This Pestalotiopsis fici (strain W106-1 / CGMCC3.15140) protein is Oxidoreductase ptaL.